The sequence spans 237 residues: Ribosomal RNA small subunit methyltransferase G (237 aa).

Residues Gly-78, Phe-83, Ala-129–Glu-130, and Arg-148 contribute to the S-adenosyl-L-methionine site.

It belongs to the methyltransferase superfamily. RNA methyltransferase RsmG family.

The protein localises to the cytoplasm. Functionally, specifically methylates the N7 position of a guanine in 16S rRNA. This is Ribosomal RNA small subunit methyltransferase G from Streptococcus equi subsp. zooepidemicus (strain H70).